Consider the following 239-residue polypeptide: Fatty acid metabolism regulator protein (239 aa).

The HTH gntR-type domain occupies 6 to 74; it reads KGPASFAEKY…HGKPTRVNNF (69 aa). The segment at residues 34–53 is a DNA-binding region (H-T-H motif); sequence ERELSELIGVTRTTLREVLQ.

Homodimer.

The protein resides in the cytoplasm. Multifunctional regulator of fatty acid metabolism. In Shewanella pealeana (strain ATCC 700345 / ANG-SQ1), this protein is Fatty acid metabolism regulator protein.